The sequence spans 486 residues: Cardiolipin synthase A (486 aa).

The next 2 membrane-spanning stretches (helical) occupy residues 3–23 (TVYT…IAGV) and 38–58 (MAWL…YLAV). PLD phosphodiesterase domains are found at residues 219–246 (MDLR…VDPR) and 399–426 (EGGL…DMRS). Active-site residues include H224, K226, D231, H404, K406, and D411.

This sequence belongs to the phospholipase D family. Cardiolipin synthase subfamily. ClsA sub-subfamily.

It is found in the cell inner membrane. It carries out the reaction 2 a 1,2-diacyl-sn-glycero-3-phospho-(1'-sn-glycerol) = a cardiolipin + glycerol. Functionally, catalyzes the reversible phosphatidyl group transfer from one phosphatidylglycerol molecule to another to form cardiolipin (CL) (diphosphatidylglycerol) and glycerol. The protein is Cardiolipin synthase A of Shigella boydii serotype 4 (strain Sb227).